The chain runs to 223 residues: Regulator of G-protein signaling 19 (223 aa).

Positions 1–30 (MPTPPEAEKQQTGPEEADQPPSMSSHDAAP) are disordered. A compositionally biased stretch (low complexity) spans 20 to 29 (PPSMSSHDAA). Residues S24 and S103 each carry the phosphoserine modification. In terms of domain architecture, RGS spans 96-212 (SFDKLMHSPA…LSSPAYRALL (117 aa)). S157 is subject to Phosphoserine; by MAPK1 and MAPK3. Residues 213–223 (LQGASQSSSEA) form an interaction with GIPC region.

Interacts with GIPC PDZ domain. Interacts with GNAO1. Fatty acylated. Heavily palmitoylated in the cysteine string motif. Post-translationally, phosphorylated, mainly on serine residues.

It is found in the membrane. Functionally, inhibits signal transduction by increasing the GTPase activity of G protein alpha subunits thereby driving them into their inactive GDP-bound form. Binds to G-alpha subfamily 1 members, with the order G(i)a3 &gt; G(i)a1 &gt; G(o)a &gt;&gt; G(z)a/G(i)a2. Activity on G(z)-alpha is inhibited by phosphorylation and palmitoylation of the G-protein. The protein is Regulator of G-protein signaling 19 (RGS19) of Bos taurus (Bovine).